Here is a 207-residue protein sequence, read N- to C-terminus: ATP synthase subunit b 2 (207 aa).

Residues 53 to 72 (TYASQLLWLVITFSVFYLLM) form a helical membrane-spanning segment.

The protein belongs to the ATPase B chain family. As to quaternary structure, F-type ATPases have 2 components, F(1) - the catalytic core - and F(0) - the membrane proton channel. F(1) has five subunits: alpha(3), beta(3), gamma(1), delta(1), epsilon(1). F(0) has three main subunits: a(1), b(2) and c(10-14). The alpha and beta chains form an alternating ring which encloses part of the gamma chain. F(1) is attached to F(0) by a central stalk formed by the gamma and epsilon chains, while a peripheral stalk is formed by the delta and b chains.

It is found in the cell inner membrane. F(1)F(0) ATP synthase produces ATP from ADP in the presence of a proton or sodium gradient. F-type ATPases consist of two structural domains, F(1) containing the extramembraneous catalytic core and F(0) containing the membrane proton channel, linked together by a central stalk and a peripheral stalk. During catalysis, ATP synthesis in the catalytic domain of F(1) is coupled via a rotary mechanism of the central stalk subunits to proton translocation. Its function is as follows. Component of the F(0) channel, it forms part of the peripheral stalk, linking F(1) to F(0). The b'-subunit is a diverged and duplicated form of b found in plants and photosynthetic bacteria. The polypeptide is ATP synthase subunit b 2 (atpF2) (Rhizobium etli (strain CIAT 652)).